Here is a 493-residue protein sequence, read N- to C-terminus: MKRQAFSLLSRLNPWQQLLLSAVLVTLAAPAAAQLRAPGTRTQGIFTQQGSQSASQGSTVAPSQPMMGVPQPSSQPRSQLVDEVVAVVNNSVITRRELLDRADEIESQLRAAKREVPPRPDLLGEVLERLVMERVQTQAAQEAGIKVTDQEVDRAIESVAQQNKMSATELRSRVEASGMSWTKYRDELRKQVQVIRLREREVDSKVQVYDGEIDNYLAARNGGQAAASGPTEFNVAQILVRVPEDASDAQKAQLKTKAEGLLKQVQGGADFAELAKANSEAPEASQGGSLGFREIGRLPAVFANAVVDLQPGAVVPEVLESANGFHVVKLVSKRTAAAQPAASDRIAQTQVRHILIRTGPNMPEAEAKRQMATIRDRITHGVDFADAARRYSQDGSASQGGELGWVSPGELVPEFEQAMNRLRPGEISDPVVTQFGVHLIQVENRRETEVSPEKQRDFARAEVREQKLRAAYDDWVRQLRSAAYVEYRINRQR.

The first 33 residues, M1–A33, serve as a signal peptide directing secretion. Residues F46–P76 are disordered. Residues Q48–S58 are compositionally biased toward low complexity. PpiC domains lie at P230–S332 and I346–N444.

It is found in the periplasm. It carries out the reaction [protein]-peptidylproline (omega=180) = [protein]-peptidylproline (omega=0). Chaperone involved in the correct folding and assembly of outer membrane proteins. Recognizes specific patterns of aromatic residues and the orientation of their side chains, which are found more frequently in integral outer membrane proteins. May act in both early periplasmic and late outer membrane-associated steps of protein maturation. The sequence is that of Chaperone SurA from Cupriavidus metallidurans (strain ATCC 43123 / DSM 2839 / NBRC 102507 / CH34) (Ralstonia metallidurans).